A 650-amino-acid chain; its full sequence is MICOS complex subunit MIC60, mitochondrial (650 aa).

Residues 1–34 constitute a mitochondrion transit peptide; it reads MLRKSVLELSSRLSIKRFPRNLGAQRFHLSSSRN. Positions 26 to 74 are disordered; the sequence is RFHLSSSRNASTSGKNGLPGAKPVGKPDASKVDPPKVTPPPPTKGNSSK. Residues 28–40 are compositionally biased toward polar residues; that stretch reads HLSSSRNASTSGK. Residues 35-74 are Mitochondrial matrix-facing; that stretch reads ASTSGKNGLPGAKPVGKPDASKVDPPKVTPPPPTKGNSSK. The helical transmembrane segment at 75-95 threads the bilayer; sequence VVIGGVAIAGAFLVAYQTGYL. At 96 to 549 the chain is on the mitochondrial intermembrane side; sequence DQYLGKEQQK…FDTLKGTLRH (454 aa). Disordered stretches follow at residues 121 to 168, 239 to 267, and 284 to 304; these read EAHH…ESDL, QSSS…EDGI, and EGSD…TKET. Low complexity predominate over residues 284 to 299; the sequence is EGSDTESTGSSSIGEQ. 2 coiled-coil regions span residues 345 to 369 and 396 to 430; these read AQVF…LRAR and KAIQ…LAKA. Residues 550–570 form a helical membrane-spanning segment; the sequence is FSLIPPGGGGILAHSLAHVAS. The Mitochondrial matrix portion of the chain corresponds to 571–650; that stretch reads SLKFKEVDQA…QSYATCVSLT (80 aa).

It belongs to the MICOS complex subunit Mic60 family. Component of the mitochondrial contact site and cristae organizing system (MICOS) complex. The MICOS complex associates with mitochondrial outer membrane proteins. Present in a large lipid-enriched complex called mitochondrial transmembrane lipoprotein (MTL) complex made of proteins located in the two mitochondrial membranes, including the TOM complex and the core components of the MICOS complex and containing at least digalactosyldiacylglycerol (DGDG). Binds to TOM40-1. Component of a mitochondrial large protein complex that contains, at least, MIC60, DGS1, TOM40, TOM20 proteins, and petC/RISP.

It localises to the mitochondrion inner membrane. Functionally, component of the MICOS complex, a large protein complex of the mitochondrial inner membrane that plays crucial roles in the maintenance of crista junctions, inner membrane architecture, and formation of contact sites to the outer membrane. Plays a role in keeping cristae membranes connected to the inner boundary membrane. Also promotes protein import via the mitochondrial intermembrane space assembly (MIA) pathway. Involved in the maintenance of mitochondria morphology. Binds to glycerolipids such as cardiolipin (CL). Contributes to the export of phosphatidylethanolamine (PE) from mitochondria and to the import of galactoglycerolipids from plastids during phosphate (Pi) starvation. Promotes lipid desorption from membranes, likely as an initial step for lipid transfer, and regulates probably the tethering between the inner and outer membranes of mitochondria by binding to TOM40 proteins. In Arabidopsis thaliana (Mouse-ear cress), this protein is MICOS complex subunit MIC60, mitochondrial.